We begin with the raw amino-acid sequence, 124 residues long: uncharacterized protein (124 aa).

The signal sequence occupies residues 1 to 19 (MRLLVQKVILIYLARYAKS). The next 2 membrane-spanning stretches (helical) occupy residues 37 to 57 (IAEF…GVKF) and 86 to 108 (LGAL…IIII).

The protein resides in the membrane. This is an uncharacterized protein from Saccharomyces cerevisiae (strain ATCC 204508 / S288c) (Baker's yeast).